A 256-amino-acid chain; its full sequence is Ribonuclease 3 (256 aa).

Residues 6–128 (LATLETRLDH…LFGAVFLDAG (123 aa)) form the RNase III domain. A Mg(2+)-binding site is contributed by E41. The active site involves D45. Positions 114 and 117 each coordinate Mg(2+). The active site involves E117. One can recognise a DRBM domain in the interval 155 to 225 (DAKTLLQEFL…AKVALEAAQA (71 aa)).

The protein belongs to the ribonuclease III family. In terms of assembly, homodimer. The cofactor is Mg(2+).

The protein resides in the cytoplasm. The enzyme catalyses Endonucleolytic cleavage to 5'-phosphomonoester.. Digests double-stranded RNA. Involved in the processing of primary rRNA transcript to yield the immediate precursors to the large and small rRNAs (23S and 16S). Processes some mRNAs, and tRNAs when they are encoded in the rRNA operon. Processes pre-crRNA and tracrRNA of type II CRISPR loci if present in the organism. The chain is Ribonuclease 3 from Bordetella bronchiseptica (strain ATCC BAA-588 / NCTC 13252 / RB50) (Alcaligenes bronchisepticus).